We begin with the raw amino-acid sequence, 1008 residues long: DNA polymerase catalytic subunit (1008 aa).

This sequence belongs to the DNA polymerase type-B family.

It localises to the host nucleus. It catalyses the reaction DNA(n) + a 2'-deoxyribonucleoside 5'-triphosphate = DNA(n+1) + diphosphate. This chain is DNA polymerase catalytic subunit (9), found in Equine herpesvirus 2 (strain 86/87) (EHV-2).